The chain runs to 425 residues: tRNA(Ile)-lysidine synthase (425 aa).

S27–S32 provides a ligand contact to ATP.

This sequence belongs to the tRNA(Ile)-lysidine synthase family.

Its subcellular location is the cytoplasm. The catalysed reaction is cytidine(34) in tRNA(Ile2) + L-lysine + ATP = lysidine(34) in tRNA(Ile2) + AMP + diphosphate + H(+). Its function is as follows. Ligates lysine onto the cytidine present at position 34 of the AUA codon-specific tRNA(Ile) that contains the anticodon CAU, in an ATP-dependent manner. Cytidine is converted to lysidine, thus changing the amino acid specificity of the tRNA from methionine to isoleucine. The sequence is that of tRNA(Ile)-lysidine synthase from Streptococcus pneumoniae serotype 19F (strain G54).